We begin with the raw amino-acid sequence, 198 residues long: Probable molybdenum cofactor guanylyltransferase (198 aa).

Residues 9–11 (LAG), Lys-22, Asp-66, and Asp-95 each bind GTP. Asp-95 lines the Mg(2+) pocket.

It belongs to the MobA family. Requires Mg(2+) as cofactor.

Its subcellular location is the cytoplasm. The enzyme catalyses Mo-molybdopterin + GTP + H(+) = Mo-molybdopterin guanine dinucleotide + diphosphate. Transfers a GMP moiety from GTP to Mo-molybdopterin (Mo-MPT) cofactor (Moco or molybdenum cofactor) to form Mo-molybdopterin guanine dinucleotide (Mo-MGD) cofactor. The sequence is that of Probable molybdenum cofactor guanylyltransferase from Clostridium perfringens (strain ATCC 13124 / DSM 756 / JCM 1290 / NCIMB 6125 / NCTC 8237 / Type A).